We begin with the raw amino-acid sequence, 324 residues long: tRNA-cytidine(32) 2-sulfurtransferase (324 aa).

The tract at residues 1–26 is disordered; the sequence is MQDLIDSPTAARTPAEEKIRHEGNKL. Residues 14 to 26 show a composition bias toward basic and acidic residues; it reads PAEEKIRHEGNKL. A PP-loop motif motif is present at residues 55-60; that stretch reads SGGKDS. [4Fe-4S] cluster-binding residues include C130, C133, and C221. The interval 278 to 310 is disordered; that stretch reads RPDANGDTAFDPIDPEDPREDAGDACASSPADG.

It belongs to the TtcA family. As to quaternary structure, homodimer. It depends on Mg(2+) as a cofactor. [4Fe-4S] cluster serves as cofactor.

The protein resides in the cytoplasm. It carries out the reaction cytidine(32) in tRNA + S-sulfanyl-L-cysteinyl-[cysteine desulfurase] + AH2 + ATP = 2-thiocytidine(32) in tRNA + L-cysteinyl-[cysteine desulfurase] + A + AMP + diphosphate + H(+). It functions in the pathway tRNA modification. Functionally, catalyzes the ATP-dependent 2-thiolation of cytidine in position 32 of tRNA, to form 2-thiocytidine (s(2)C32). The sulfur atoms are provided by the cysteine/cysteine desulfurase (IscS) system. The sequence is that of tRNA-cytidine(32) 2-sulfurtransferase from Bordetella petrii (strain ATCC BAA-461 / DSM 12804 / CCUG 43448).